Here is a 437-residue protein sequence, read N- to C-terminus: UDP-N-acetylmuramate--L-alanine ligase (437 aa).

Position 108–114 (108–114 (GAHGKTS)) interacts with ATP.

This sequence belongs to the MurCDEF family.

The protein resides in the cytoplasm. The enzyme catalyses UDP-N-acetyl-alpha-D-muramate + L-alanine + ATP = UDP-N-acetyl-alpha-D-muramoyl-L-alanine + ADP + phosphate + H(+). It participates in cell wall biogenesis; peptidoglycan biosynthesis. Cell wall formation. In Lysinibacillus sphaericus (strain C3-41), this protein is UDP-N-acetylmuramate--L-alanine ligase.